The primary structure comprises 226 residues: GTP-binding nuclear protein Ran-3 (226 aa).

Positions glycine 14–aspartate 178 constitute a Small GTPase Ran-type domain. Residue aspartate 25–threonine 32 participates in GTP binding. The segment at lysine 44–valine 52 is switch-I. Residues glycine 75, asparagine 129–aspartate 132, and serine 157–lysine 159 each bind GTP. A switch-II region spans residues glycine 75–histidine 91.

It belongs to the small GTPase superfamily. Ran family. Found in a nuclear export complex with RanGTP, exportin and pre-miRNA.

It localises to the nucleus. In terms of biological role, GTP-binding protein involved in nucleocytoplasmic transport. Required for the import of protein into the nucleus and also for RNA export. Involved in chromatin condensation and control of cell cycle. This is GTP-binding nuclear protein Ran-3 (RAN3) from Oryza sativa subsp. indica (Rice).